The chain runs to 359 residues: sn-1 acyl-lipid omega-3 desaturase (ferredoxin) (359 aa).

The next 2 helical transmembrane spans lie at 44–64 (LGYFFLDVGLIAGFYALAAYL) and 67–87 (WFFYPIFWLIQGTLFWSLFVV). The Histidine box-1 signature appears at 89–93 (HDCGH). Residues 125-129 (HRTHH) carry the Histidine box-2 motif. The next 3 membrane-spanning stretches (helical) occupy residues 153-173 (AWYEKLLRFYLPLIAYPIYLF), 206-226 (LAAFVGFLGFLTWQFGWLFLL), and 228-248 (FYVAPYLVFVVWLDLVTFLHH). The Histidine box-3 signature appears at 291–295 (HHIFS).

Belongs to the fatty acid desaturase type 2 family. The cofactor is Fe(2+).

Its subcellular location is the membrane. It carries out the reaction a 1-[(9Z,12Z)-octadecdienoyl]-2-acyl-glycerolipid + 2 reduced [2Fe-2S]-[ferredoxin] + O2 + 2 H(+) = a 1-[(9Z,12Z,15Z)-octadectrienoyl]-2-acyl-glycerolipid + 2 oxidized [2Fe-2S]-[ferredoxin] + 2 H2O. The enzyme catalyses a 1-[(6Z,9Z,12Z)-octadectrienoyl]-2-acyl-glycerolipid + 2 reduced [2Fe-2S]-[ferredoxin] + O2 + 2 H(+) = a 1-[(6Z,9Z,12Z,15Z)-octadectetraenoyl]-2-acyl-glycerolipid + 2 oxidized [2Fe-2S]-[ferredoxin] + 2 H2O. The protein operates within lipid metabolism; polyunsaturated fatty acid biosynthesis. In terms of biological role, desaturase involved in fatty acid biosynthesis. Introduces a double bond at carbon 15 of linoleoyl and gamma-linolenoyl groups attached to the sn-1 position of the glycerol moiety of membrane glycerolipids. The polypeptide is sn-1 acyl-lipid omega-3 desaturase (ferredoxin) (Synechocystis sp. (strain ATCC 27184 / PCC 6803 / Kazusa)).